Here is a 567-residue protein sequence, read N- to C-terminus: Synaptotagmin-like protein 1 (567 aa).

The 57-residue stretch at 31-87 folds into the RabBD domain; sequence LLDLSFLTEEEQEAISDVLKRDAHLRQLEEGRVSKLRASLEDPWQLKILTGDWFQEA. Residues 103-255 are disordered; it reads RASIRRKKSP…VSSLNSSTLS (153 aa). A Phosphoserine modification is found at Ser-120. Acidic residues-rich tracts occupy residues 122–135 and 170–184; these read GEAE…IEGE and GQEE…ELEA. The span at 208-219 shows a compositional bias: polar residues; sequence ESQPTPAQSKAT. Ser-220 carries the phosphoserine modification. Over residues 235–255 the composition is skewed to low complexity; sequence SLDRMLSSSSSVSSLNSSTLS. 2 consecutive C2 domains span residues 271–390 and 403–532; these read VRGS…WLPL and SRGL…VPWM.

Monomer. Binds NCF2 and NRXN1. Binds RAB27A that has been activated by GTP-binding via its N-terminus. Highly expressed in lung. Detected at lower levels in spleen, liver and kidney, and at very low levels in heart, brain and skeletal muscle. Expressed in cytotoxic T-lymphocytes (CTL).

The protein resides in the endomembrane system. It localises to the cell membrane. In terms of biological role, binds phosphatidylinositol 3,4,5-trisphosphate. May play a role in vesicle trafficking. Acts as a RAB27A effector protein and may play a role in cytotoxic granule exocytosis in lymphocytes. The polypeptide is Synaptotagmin-like protein 1 (Sytl1) (Mus musculus (Mouse)).